The following is a 124-amino-acid chain: Small ribosomal subunit protein uS12c (124 aa).

It belongs to the universal ribosomal protein uS12 family. In terms of assembly, part of the 30S ribosomal subunit.

It localises to the plastid. Its subcellular location is the chloroplast. Functionally, with S4 and S5 plays an important role in translational accuracy. Located at the interface of the 30S and 50S subunits. The polypeptide is Small ribosomal subunit protein uS12c (rps12) (Oryza nivara (Indian wild rice)).